We begin with the raw amino-acid sequence, 316 residues long: MNTILTCQDEYFAGGLGYDCPYFSSTSASTVDVSKETWVSLWASGLLDNRSSNHGPHTQGQLYNMGNSLQEDYLFGDQLSSQISANKQLQDTLLQKEEELSRLHEENNKLKEFLNSAFVKTLAEKTKKLLHQNGQSSFCTNPNSRVPFSSNSTPGSKAKRARRNLYGELTACEAQSSPVVEKWVLQTLGLKDVDTIDDSALANYSAMSLQPKQDSPSSGYSSAHLTPGHSQAATSCSLSPSQCSSASLPESETASPLSSPTYHTPDVAPNKTEVAFSTSLHPHCNVKTHSFPQGQAFVRRDTQGGWKFTWVPKQSE.

Residues 82-117 adopt a coiled-coil conformation; it reads QISANKQLQDTLLQKEEELSRLHEENNKLKEFLNSA. Composition is skewed to polar residues over residues 134–155 and 207–234; these read GQSS…STPG and MSLQ…QAAT. 2 disordered regions span residues 134–160 and 207–269; these read GQSS…KAKR and MSLQ…DVAP. Threonine 153 is subject to Phosphothreonine; by cdk2. Residues 235–252 show a composition bias toward low complexity; it reads SCSLSPSQCSSASLPESE. The segment covering 253–262 has biased composition (polar residues); the sequence is TASPLSSPTY.

This sequence belongs to the GEMC1 family. As to quaternary structure, interacts with topbp1. Interacts with Cdc45l and the kinase cdk2-cyclin-E (the interaction is direct). In terms of processing, highly phosphorylated by cdk2; stimulates initiation of DNA replication. In terms of tissue distribution, expressed in most tissues. Enriched in proliferating cells from skin and gut.

It is found in the nucleus. Regulator of DNA replication. Promotes initiation of chromosomal DNA replication by mediating topbp1- and cdk2-dependent recruitment of cdc45l onto replication origins. The chain is Geminin coiled-coil domain-containing protein 1 (gmnc) from Xenopus laevis (African clawed frog).